The following is a 472-amino-acid chain: Tryptophan--tRNA ligase, cytoplasmic (472 aa).

Positions 9–65 constitute a WHEP-TRS domain; sequence SPLELFNSIATQGELVRSLKAGNASKDEIDSAVKMLLSLKMSYKAAMGEDYKANCPP. Lys-155 bears the N6-succinyllysine mark. The short motif at 165 to 174 is the 'HIGH' region element; sequence PSSEAMHVGH. A 'KMSKS' region motif is present at residues 350-354; it reads KMSAS. A Phosphoserine modification is found at Ser-352.

The protein belongs to the class-I aminoacyl-tRNA synthetase family. Homodimer. Interacts with oxidized form of GAPDH. Post-translationally, proteolytic cleavage generates 2 forms; T1-TrpRS and T2-TrpRS.

It localises to the cytoplasm. The catalysed reaction is tRNA(Trp) + L-tryptophan + ATP = L-tryptophyl-tRNA(Trp) + AMP + diphosphate + H(+). Functionally, catalyzes the attachment of tryptophan to tRNA(Trp) in a two-step reaction: tryptophan is first activated by ATP to form Trp-AMP and then transferred to the acceptor end of the tRNA(Trp). Could also possess an angiostatic activity. In Pongo abelii (Sumatran orangutan), this protein is Tryptophan--tRNA ligase, cytoplasmic (WARS1).